The following is a 130-amino-acid chain: Small ribosomal subunit protein uS9 (130 aa).

Belongs to the universal ribosomal protein uS9 family.

This is Small ribosomal subunit protein uS9 from Xanthomonas campestris pv. campestris (strain 8004).